Consider the following 44-residue polypeptide: Photosystem I reaction center subunit IX (44 aa).

Residues 7–27 (YLSVAPVLSTLWFGALAGLLI) form a helical membrane-spanning segment.

It belongs to the PsaJ family.

The protein localises to the plastid. It localises to the chloroplast thylakoid membrane. Functionally, may help in the organization of the PsaE and PsaF subunits. In Solanum bulbocastanum (Wild potato), this protein is Photosystem I reaction center subunit IX.